The primary structure comprises 284 residues: Glutamate 5-kinase 2 (284 aa).

K26 provides a ligand contact to ATP. 3 residues coordinate substrate: S67, D154, and N166. Residues 186–187 (SD) and 228–234 (SGGMVTK) contribute to the ATP site.

Belongs to the glutamate 5-kinase family.

The protein resides in the cytoplasm. The catalysed reaction is L-glutamate + ATP = L-glutamyl 5-phosphate + ADP. It participates in amino-acid biosynthesis; L-proline biosynthesis; L-glutamate 5-semialdehyde from L-glutamate: step 1/2. Its function is as follows. Catalyzes the transfer of a phosphate group to glutamate to form L-glutamate 5-phosphate. The chain is Glutamate 5-kinase 2 from Mesorhizobium japonicum (strain LMG 29417 / CECT 9101 / MAFF 303099) (Mesorhizobium loti (strain MAFF 303099)).